The primary structure comprises 1306 residues: Angiotensin-converting enzyme (1306 aa).

A signal peptide spans 1–28 (MGAASGRRSPPLLLPLLLLLLPPPPVIL). Topologically, residues 29–1256 (ELDPALQPGN…GLNLEEQQAR (1228 aa)) are extracellular. 2 Peptidase M2 domains span residues 40–624 (PADE…LGWP) and 643–1222 (VSDE…LGWP). 5 N-linked (GlcNAc...) asparagine glycosylation sites follow: Asn54, Asn74, Asn111, Asn146, and Asn160. Cysteines 157 and 165 form a disulfide. Tyr231 contacts chloride. N-linked (GlcNAc...) asparagine glycosylation is present at Asn318. Cysteines 359 and 377 form a disulfide. Residue His390 participates in Zn(2+) binding. Glu391 serves as the catalytic Proton acceptor 1. Residues His394 and Glu418 each coordinate Zn(2+). N-linked (GlcNAc...) asparagine glycosylation is found at Asn445 and Asn509. His520 functions as the Proton donor 1 in the catalytic mechanism. N-linked (GlcNAc...) asparagine glycosylation is present at Asn523. Arg529 contacts chloride. Cys545 and Cys557 are oxidised to a cystine. Residues Asn673, Asn695, Asn714, and Asn760 are each glycosylated (N-linked (GlcNAc...) asparagine). Cys757 and Cys763 are oxidised to a cystine. 2 residues coordinate chloride: Arg791 and Tyr829. N-linked (GlcNAc...) asparagine glycosylation is present at Asn942. Cys957 and Cys975 are oxidised to a cystine. His988 lines the Zn(2+) pocket. Glu989 (proton acceptor 2) is an active-site residue. Zn(2+)-binding residues include His992 and Glu1016. 2 residues coordinate chloride: Trp1090 and Arg1094. The active-site Proton donor 2 is His1118. Arg1127 serves as a coordination point for chloride. Residues Cys1143 and Cys1155 are joined by a disulfide bond. Asn1191 and Asn1225 each carry an N-linked (GlcNAc...) asparagine glycan. Residues 1215–1256 (HGEKLGWPQYNWTPNSARLEGPFVGSGRVNFLGLNLEEQQAR) are juxtamembrane stalk. A helical transmembrane segment spans residues 1257 to 1277 (VGQWVLLFLGVALLVATLGLT). Residues 1278-1306 (QRLFSIRHHSLRRPHRGPQFGSEVELRHS) lie on the Cytoplasmic side of the membrane. Residue Ser1299 is modified to Phosphoserine.

Belongs to the peptidase M2 family. As to quaternary structure, monomer and homodimer; homodimerizes following binding to an inhibitor. Interacts with calmodulin (CALM1, CALM2 or CALM3); interaction takes place in the cytoplasmic region and regulates phosphorylation and proteolytic cleavage. Zn(2+) is required as a cofactor. Requires chloride as cofactor. Produced following proteolytic cleavage by secretase enzymes that cleave the transmembrane form in the juxtamembrane stalk region upstream of the transmembrane region. Cleavage can take place at different sites of the juxtamembrane stalk region. In terms of processing, phosphorylated by CK2 on Ser-1299; which allows membrane retention. Phosphorylated on tyrosine residues on its extracellular part, promoting cleavage by secretase enzymes and formation of the soluble form (Angiotensin-converting enzyme, soluble form).

The protein localises to the cell membrane. It localises to the cytoplasm. It is found in the secreted. The enzyme catalyses Release of a C-terminal dipeptide, oligopeptide-|-Xaa-Yaa, when Xaa is not Pro, and Yaa is neither Asp nor Glu. Thus, conversion of angiotensin I to angiotensin II, with increase in vasoconstrictor activity, but no action on angiotensin II.. The catalysed reaction is angiotensin I + H2O = L-histidyl-L-leucine + angiotensin II. It carries out the reaction bradykinin + H2O = L-Phe-L-Arg + bradykinin(1-7). It catalyses the reaction substance P + H2O = substance P(1-9) + L-Leu-L-Met-NH2. The enzyme catalyses substance P + H2O = substance P(1-8) + Gly-L-Leu-L-Met-NH2. The catalysed reaction is substance P + H2O = L-Phe-L-Phe-Gly-L-Leu-L-Met-NH2 + substance P(1-6). It carries out the reaction neurotensin + H2O = neurotensin(1-11) + L-isoleucyl-L-leucine. It catalyses the reaction goralatide + H2O = N-acetyl-L-seryl-L-aspartate + L-lysyl-L-proline. The enzyme catalyses Met-enkephalin + H2O = L-phenylalanyl-L-methionine + L-tyrosylglycylglycine. The catalysed reaction is Leu-enkephalin + H2O = L-tyrosylglycylglycine + L-phenylalanyl-L-leucine. It carries out the reaction Met-enkephalin-Arg-Phe + H2O = L-arginyl-L-phenylalanine + Met-enkephalin. The dipeptidyl carboxypeptidase activity is strongly activated by chloride. The dipeptidyl carboxypeptidase activity is specifically inhibited by lisinopril, captopril and enalaprilat. Dipeptidyl carboxypeptidase that removes dipeptides from the C-terminus of a variety of circulating hormones, such as angiotensin I, bradykinin or enkephalins, thereby playing a key role in the regulation of blood pressure, electrolyte homeostasis or synaptic plasticity. Composed of two similar catalytic domains, each possessing a functional active site, with different selectivity for substrates. Plays a major role in the angiotensin-renin system that regulates blood pressure and sodium retention by the kidney by converting angiotensin I to angiotensin II, resulting in an increase of the vasoconstrictor activity of angiotensin. Also able to inactivate bradykinin, a potent vasodilator, and therefore enhance the blood pressure response. Acts as a regulator of synaptic transmission by mediating cleavage of neuropeptide hormones, such as substance P, neurotensin or enkephalins. Catalyzes degradation of different enkephalin neuropeptides (Met-enkephalin, Leu-enkephalin, Met-enkephalin-Arg-Phe and possibly Met-enkephalin-Arg-Gly-Leu). Acts as a regulator of synaptic plasticity in the nucleus accumbens of the brain by mediating cleavage of Met-enkephalin-Arg-Phe, a strong ligand of Mu-type opioid receptor OPRM1, into Met-enkephalin. Met-enkephalin-Arg-Phe cleavage by ACE decreases activation of OPRM1, leading to long-term synaptic potentiation of glutamate release. Also acts as a regulator of hematopoietic stem cell differentiation by mediating degradation of hemoregulatory peptide N-acetyl-SDKP (AcSDKP). Acts as a regulator of cannabinoid signaling pathway by mediating degradation of hemopressin, an antagonist peptide of the cannabinoid receptor CNR1. Involved in amyloid-beta metabolism by catalyzing degradation of Amyloid-beta protein 40 and Amyloid-beta protein 42 peptides, thereby preventing plaque formation. Catalyzes cleavage of cholecystokinin (maturation of Cholecystokinin-8 and Cholecystokinin-5) and Gonadoliberin-1 (both maturation and degradation) hormones. Degradation of hemoregulatory peptide N-acetyl-SDKP (AcSDKP) and amyloid-beta proteins is mediated by the N-terminal catalytic domain, while angiotensin I and cholecystokinin cleavage is mediated by the C-terminal catalytic region. Its function is as follows. Soluble form that is released in blood plasma and other body fluids following proteolytic cleavage in the juxtamembrane stalk region. The polypeptide is Angiotensin-converting enzyme (Bos taurus (Bovine)).